Here is a 465-residue protein sequence, read N- to C-terminus: Na(+)-translocating NADH-quinone reductase subunit A (465 aa).

It belongs to the NqrA family. As to quaternary structure, composed of six subunits; NqrA, NqrB, NqrC, NqrD, NqrE and NqrF.

The catalysed reaction is a ubiquinone + n Na(+)(in) + NADH + H(+) = a ubiquinol + n Na(+)(out) + NAD(+). Functionally, NQR complex catalyzes the reduction of ubiquinone-1 to ubiquinol by two successive reactions, coupled with the transport of Na(+) ions from the cytoplasm to the periplasm. NqrA to NqrE are probably involved in the second step, the conversion of ubisemiquinone to ubiquinol. This chain is Na(+)-translocating NADH-quinone reductase subunit A, found in Chlamydia trachomatis serovar L2b (strain UCH-1/proctitis).